A 137-amino-acid chain; its full sequence is Small ribosomal subunit protein uS11 (137 aa).

Disordered stretches follow at residues 1–31 (MPPK…AAHI) and 117–137 (TISD…RRRV). Residues 12–21 (KTQKARRRDK) show a composition bias toward basic residues.

Belongs to the universal ribosomal protein uS11 family. As to quaternary structure, part of the 30S ribosomal subunit. Interacts with proteins S7 and S18. Binds to IF-3.

Located on the platform of the 30S subunit, it bridges several disparate RNA helices of the 16S rRNA. Forms part of the Shine-Dalgarno cleft in the 70S ribosome. The sequence is that of Small ribosomal subunit protein uS11 from Rhodococcus jostii (strain RHA1).